The primary structure comprises 321 residues: Glutathione synthetase (321 aa).

An ATP-grasp domain is found at Glu125–Glu311. Phe151 to Gly208 contributes to the ATP binding site. 2 residues coordinate Mg(2+): Glu282 and Asn284.

Belongs to the prokaryotic GSH synthase family. The cofactor is Mg(2+). Mn(2+) serves as cofactor.

The catalysed reaction is gamma-L-glutamyl-L-cysteine + glycine + ATP = glutathione + ADP + phosphate + H(+). Its pathway is sulfur metabolism; glutathione biosynthesis; glutathione from L-cysteine and L-glutamate: step 2/2. The chain is Glutathione synthetase from Coxiella burnetii (strain RSA 493 / Nine Mile phase I).